The chain runs to 282 residues: Probable endonuclease 4 (282 aa).

Zn(2+) contacts are provided by His-69, His-109, Glu-145, Asp-179, His-182, His-216, Asp-229, His-231, and Glu-261.

This sequence belongs to the AP endonuclease 2 family. Zn(2+) serves as cofactor.

It carries out the reaction Endonucleolytic cleavage to 5'-phosphooligonucleotide end-products.. Its function is as follows. Endonuclease IV plays a role in DNA repair. It cleaves phosphodiester bonds at apurinic or apyrimidinic (AP) sites, generating a 3'-hydroxyl group and a 5'-terminal sugar phosphate. The polypeptide is Probable endonuclease 4 (Campylobacter hominis (strain ATCC BAA-381 / DSM 21671 / CCUG 45161 / LMG 19568 / NCTC 13146 / CH001A)).